Here is a 499-residue protein sequence, read N- to C-terminus: Protein-tyrosine sulfotransferase (499 aa).

Residues 1-9 lie on the Cytoplasmic side of the membrane; that stretch reads MRLPYRNKK. Residues 10–30 traverse the membrane as a helical; Signal-anchor for type II membrane protein segment; it reads VTLWVLFGIIVITMFLFKFTE. Over 31-499 the chain is Lumenal; the sequence is LRPTCLFKVD…NIMEDPMADT (469 aa). Residue 80–84 coordinates 3'-phosphoadenylyl sulfate; the sequence is RSGTT. A disulfide bridge connects residues Cys-98 and Cys-158. Glu-101 acts as the Proton donor/acceptor in catalysis. Positions 103–107 are interaction with peptide substrate; the sequence is RVIPR. 3'-phosphoadenylyl sulfate is bound by residues Arg-185, Ser-193, and Arg-197. An intrachain disulfide couples Cys-227 to Cys-235. 3'-phosphoadenylyl sulfate contacts are provided by residues Tyr-240, 287-296, and Lys-302; that span reads SSDQVIKPVN. Residues Asn-346 and Asn-380 are each glycosylated (N-linked (GlcNAc...) asparagine). Disordered regions lie at residues 362 to 460 and 476 to 499; these read KQVL…QKPK and NNIN…MADT. Composition is skewed to low complexity over residues 375–400 and 408–434; these read TNTI…IIPE and HVQQ…QQQQ. Over residues 443 to 460 the composition is skewed to basic and acidic residues; that stretch reads EREAEPDREQQLLHQKPK. Positions 476-491 are enriched in low complexity; it reads NNINNNINNNNNNNNI.

It belongs to the protein sulfotransferase family.

It is found in the golgi apparatus membrane. It catalyses the reaction L-tyrosyl-[protein] + 3'-phosphoadenylyl sulfate = O-sulfo-L-tyrosine-[protein] + adenosine 3',5'-bisphosphate + H(+). Functionally, catalyzes the O-sulfation of tyrosine residues within acidic motifs of polypeptides. Has a role in protein secretion. This chain is Protein-tyrosine sulfotransferase, found in Drosophila melanogaster (Fruit fly).